Consider the following 202-residue polypeptide: Imidazole glycerol phosphate synthase subunit HisH (202 aa).

In terms of domain architecture, Glutamine amidotransferase type-1 spans Arg-3–Cys-202. Cys-79 functions as the Nucleophile in the catalytic mechanism. Residues His-183 and Glu-185 contribute to the active site.

As to quaternary structure, heterodimer of HisH and HisF.

Its subcellular location is the cytoplasm. The enzyme catalyses 5-[(5-phospho-1-deoxy-D-ribulos-1-ylimino)methylamino]-1-(5-phospho-beta-D-ribosyl)imidazole-4-carboxamide + L-glutamine = D-erythro-1-(imidazol-4-yl)glycerol 3-phosphate + 5-amino-1-(5-phospho-beta-D-ribosyl)imidazole-4-carboxamide + L-glutamate + H(+). The catalysed reaction is L-glutamine + H2O = L-glutamate + NH4(+). It participates in amino-acid biosynthesis; L-histidine biosynthesis; L-histidine from 5-phospho-alpha-D-ribose 1-diphosphate: step 5/9. In terms of biological role, IGPS catalyzes the conversion of PRFAR and glutamine to IGP, AICAR and glutamate. The HisH subunit catalyzes the hydrolysis of glutamine to glutamate and ammonia as part of the synthesis of IGP and AICAR. The resulting ammonia molecule is channeled to the active site of HisF. The protein is Imidazole glycerol phosphate synthase subunit HisH of Methanosarcina mazei (strain ATCC BAA-159 / DSM 3647 / Goe1 / Go1 / JCM 11833 / OCM 88) (Methanosarcina frisia).